Here is an 88-residue protein sequence, read N- to C-terminus: MFNLFLTDTVWYVGQIIFIVAVCLMVTIIVVAFLASIKRCIQLCGLCNTLLLSPSIYLYNRSKQLYKYYNEEVRPPPLEVDDNIIQTL.

The Virion surface segment spans residues 1-16 (MFNLFLTDTVWYVGQI). Residues 17 to 37 (IFIVAVCLMVTIIVVAFLASI) form a helical membrane-spanning segment. Residues 38–79 (KRCIQLCGLCNTLLLSPSIYLYNRSKQLYKYYNEEVRPPPLE) are Intravirion-facing.

It belongs to the betacoronaviruses E protein family. In terms of assembly, homopentamer. Interacts with membrane protein M in the budding compartment of the host cell, which is located between endoplasmic reticulum and the Golgi complex. Interacts with Nucleoprotein.

The protein resides in the host Golgi apparatus membrane. In terms of biological role, plays a central role in virus morphogenesis and assembly. Acts as a viroporin and self-assembles in host membranes forming pentameric protein-lipid pores that allow ion transport. Also plays a role in the induction of apoptosis. The chain is Envelope small membrane protein from Mus musculus (Mouse).